Reading from the N-terminus, the 444-residue chain is Exodeoxyribonuclease 7 large subunit (444 aa).

It belongs to the XseA family. Heterooligomer composed of large and small subunits.

It localises to the cytoplasm. It carries out the reaction Exonucleolytic cleavage in either 5'- to 3'- or 3'- to 5'-direction to yield nucleoside 5'-phosphates.. In terms of biological role, bidirectionally degrades single-stranded DNA into large acid-insoluble oligonucleotides, which are then degraded further into small acid-soluble oligonucleotides. The protein is Exodeoxyribonuclease 7 large subunit of Rickettsia conorii (strain ATCC VR-613 / Malish 7).